A 592-amino-acid polypeptide reads, in one-letter code: Zinc metalloproteinase dpy-31 (592 aa).

An N-terminal signal peptide occupies residues 1 to 18 (MHKIFIIFGLLSLCAAHS). A propeptide spanning residues 19–127 (LRDLSNKDEE…TEGKTRVKRK (109 aa)) is cleaved from the precursor. The tract at residues 22-46 (LSNKDEEDPPSSAPGVRKRRMMSEE) is disordered. One can recognise a Peptidase M12A domain in the interval 127–326 (KFIGSNLRRW…IRLMNKIYCS (200 aa)). A glycan (N-linked (GlcNAc...) asparagine) is linked at N167. Cystine bridges form between C170–C325 and C193–C214. H222 is a Zn(2+) binding site. The active site involves E223. 2 residues coordinate Zn(2+): H226 and H232. In terms of domain architecture, EGF-like spans 349–361 (CRCPDGFTGQYCE). C371 and C399 form a disulfide bridge. The CUB domain maps to 371–487 (CGGKISLTRS…KGFEARARAV (117 aa)). N-linked (GlcNAc...) asparagine glycosylation occurs at N438. The region spanning 490-540 (AGNWNSWSPWTACSATCGACGSRMRTRTCPPGNACSGEPVETQICNTQACT) is the TSP type-1 domain. Intrachain disulfides connect C502–C534, C506–C539, and C518–C524.

Zn(2+) serves as cofactor. In terms of tissue distribution, expressed in hypodermis, rectal and vulval epithelial cells and amphid socket cells.

It localises to the secreted. Functionally, metalloprotease which cleaves the carboxyl terminus of procollagens, such as sqt-3, to mature collagens. Involved in cuticular collagen maturation. This chain is Zinc metalloproteinase dpy-31, found in Caenorhabditis elegans.